The chain runs to 40 residues: uncharacterized protein (40 aa).

The first 27 residues, 1–27 (MFPADVILQCFGFSVGIALVGYVISLF), serve as a signal peptide directing secretion.

This is an uncharacterized protein from Archaeoglobus fulgidus (strain ATCC 49558 / DSM 4304 / JCM 9628 / NBRC 100126 / VC-16).